The following is a 931-amino-acid chain: MAARDSDSEEDLVSYGTGLEPLEEGERPKKPIPLQDQTVRDEKGRYKRFHGAFSGGFSAGYFNTVGSKEGWTPSTFVSSRQNRADKSVLGPEDFMDEEDLSEFGIAPKAIVTTDDFASKTKDRIREKARQLAAATAPIPGATLLDDLITPAKLSVGFELLRKMGWKEGQGVGPRVKRRPRRQKPDPGVKIYGCALPPGSSEGSEGEDDDYLPDNVTFAPKDVTPVDFTPKDNVHGLAYKGLDPHQALFGTSGEHFNLFSGGSERAGDLGEIGLNKGRKLGISGQAFGVGALEEEDDDIYATETLSKYDTVLKDEEPGDGLYGWTAPRQYKNQKESEKDLRYVGKILDGFSLASKPLSSKKIYPPPELPRDYRPVHYFRPMVAATSENSHLLQVLSESAGKATPDPGTHSKHQLNASKRAELLGETPIQGSATSVLEFLSQKDKERIKEMKQATDLKAAQLKARSLAQNAQSSRAQLSPAAAAGHCSWNMALGGGTATLKASNFKPFAKDPEKQKRYDEFLVHMKQGQKDALERCLDPSMTEWERGRERDEFARAALLYASSHSTLSSRFTHAKEEDDSDQVEVPRDQENDVGDKQSAVKMKMFGKLTRDTFEWHPDKLLCKRFNVPDPYPDSTLVGLPRVKRDKYSVFNFLTLPETASLPTTQASSEKVSQHRGPDKSRKPSRWDTSKHEKKEDSISEFLSLARSKAEPPKQQSSPLVNKEEEHAPELSANQTVNKDVDAQAEGEGSRPSMDLFRAIFASSSDEKSSSSEDEQGDSEDDQAGSGEANFQSSQDTDLGETSSVAHALVPAPQEPPPSFPIQKMQIDEREEFGPRLPPVFCPNARQTLEVPQKEKHKKNKDKHKAKKEHRRKKEKKKKHRKHKHKGKQKNKKPEKSSSSESSDSSDSQSDEETADVSPQELLRRLKSLPLRRQ.

Disordered regions lie at residues 1-41 (MAAR…TVRD), 73-92 (PSTF…LGPE), and 169-209 (QGVG…EDDD). Position 2 is an N-acetylalanine (alanine 2). A phosphoserine mark is found at serine 6 and serine 8. Residues 152 to 198 (KLSVGFELLRKMGWKEGQGVGPRVKRRPRRQKPDPGVKIYGCALPPG) form the G-patch domain. A Glycyl lysine isopeptide (Lys-Gly) (interchain with G-Cter in SUMO2) cross-link involves residue lysine 312. Residues serine 357 and serine 477 each carry the phosphoserine modification. Disordered stretches follow at residues 568 to 595 (RFTH…GDKQ) and 659 to 931 (LPTT…LRRQ). A compositionally biased stretch (basic and acidic residues) spans 582 to 593 (EVPRDQENDVGD). Positions 659–668 (LPTTQASSEK) are enriched in polar residues. A compositionally biased stretch (basic and acidic residues) spans 669 to 695 (VSQHRGPDKSRKPSRWDTSKHEKKEDS). Serine 715 carries the phosphoserine modification. The span at 769–780 (SEDEQGDSEDDQ) shows a compositional bias: acidic residues. The segment covering 786 to 802 (ANFQSSQDTDLGETSSV) has biased composition (polar residues). The segment covering 852-888 (EKHKKNKDKHKAKKEHRRKKEKKKKHRKHKHKGKQKN) has biased composition (basic residues). The segment covering 896 to 905 (SSESSDSSDS) has biased composition (low complexity). Residues 922-931 (RLKSLPLRRQ) are compositionally biased toward basic residues.

The protein belongs to the GPATCH1 family.

The sequence is that of G patch domain-containing protein 1 (GPATCH1) from Homo sapiens (Human).